The following is a 60-amino-acid chain: Ixodegrin-like peptide (60 aa).

A signal peptide spans 1–21 (MNAAFIAALLILGALTLDAMA). Positions 49–51 (RGD) match the Cell attachment site motif.

This sequence belongs to the ixodegrin family. Contains 3 disulfide bonds. As to expression, expressed in salivary glands.

Its subcellular location is the secreted. Tick salivary platelet aggregation inhibitor that plays an important part in the anti-hemostatic strategy of ticks. Inhibits platelet aggregation induced by ADP, thrombin and thromboxane A2 (TXA2). Blocks platelet adhesion to soluble collagen (most probably through the binding to alpha-2/beta-1 integrin (ITGA2/ITGB1)) and binds to purified glycoprotein IIb/IIIa (ITGA2B/ITGB3) in a dose-dependent manner. In vivo, reduces thrombus weight effectively in a rat arteriovenous shunt model and inhibits thrombosis in a carrageenan-induced mouse tail thrombosis model. The sequence is that of Ixodegrin-like peptide from Ixodes scapularis (Black-legged tick).